We begin with the raw amino-acid sequence, 407 residues long: Phosphopentomutase (407 aa).

Positions 10, 306, 311, 347, 348, and 359 each coordinate Mn(2+).

This sequence belongs to the phosphopentomutase family. Mn(2+) serves as cofactor.

Its subcellular location is the cytoplasm. The enzyme catalyses 2-deoxy-alpha-D-ribose 1-phosphate = 2-deoxy-D-ribose 5-phosphate. The catalysed reaction is alpha-D-ribose 1-phosphate = D-ribose 5-phosphate. The protein operates within carbohydrate degradation; 2-deoxy-D-ribose 1-phosphate degradation; D-glyceraldehyde 3-phosphate and acetaldehyde from 2-deoxy-alpha-D-ribose 1-phosphate: step 1/2. In terms of biological role, isomerase that catalyzes the conversion of deoxy-ribose 1-phosphate (dRib-1-P) and ribose 1-phosphate (Rib-1-P) to deoxy-ribose 5-phosphate (dRib-5-P) and ribose 5-phosphate (Rib-5-P), respectively. This Enterobacter sp. (strain 638) protein is Phosphopentomutase.